The primary structure comprises 91 residues: C-C motif chemokine 5 (91 aa).

A signal peptide spans 1-23 (MKVSATAFAVLLMAAALCAPASA). 2 cysteine pairs are disulfide-bonded: Cys-33-Cys-57 and Cys-34-Cys-73.

The protein belongs to the intercrine beta (chemokine CC) family.

The protein resides in the secreted. In terms of biological role, chemoattractant for blood monocytes, memory T-helper cells and eosinophils. Causes the release of histamine from basophils and activates eosinophils. May activate several chemokine receptors including CCR1, CCR3, CCR4 and CCR5. May also be an agonist of the G protein-coupled receptor GPR75. Together with GPR75, may play a role in neuron survival through activation of a downstream signaling pathway involving the PI3, Akt and MAP kinases. By activating GPR75 may also play a role in insulin secretion by islet cells. The protein is C-C motif chemokine 5 (CCL5) of Bos taurus (Bovine).